A 276-amino-acid polypeptide reads, in one-letter code: Proteasome chaperone 1 (276 aa).

The protein belongs to the PSMG1 family. Component of the 20S proteasome chaperone. Forms a heterodimer with ADD66 that binds to proteasome precursors.

It localises to the cytoplasm. In terms of biological role, involved in 20S proteasome assembly. This chain is Proteasome chaperone 1 (PBA1), found in Saccharomyces cerevisiae (strain ATCC 204508 / S288c) (Baker's yeast).